The chain runs to 391 residues: MSLNPRDAVIVDFGRTPMGRSKGGMHRNTRAETMSAQLIDGLLARNPKIDPAEVEDVIWGCVNQTLEQGWNIARMASLLTRIPHTSAGQTVSRLCGSSMSALHTAVQAIQTNNGDVFVIGGVEHMGHVSMMHGVDPNPQLSLHAAKASGMMGLTAEMLGKMHGITREAQDQFGYRSHQLAWKATQEGKFKDEIIPMEGHDENGFLKVFDYDETIRPETTLEGLAELKPAFNPKGGTVTAGTSSQITDGASCMIVMSAQRAKDLGLQPMAVVRAMALAGVDPAIMGYGPVPSTQKALKRAGLTMDDISHVELNEAFAAQALPVLKDLKLLDKMEEKVNLHGGAIALGHPFGCSGARISGTLLNVMKQNNGTLGVATMCIGLGQGISTVFERL.

Cys-95 (acyl-thioester intermediate) is an active-site residue. Residues His-347 and Cys-377 each act as proton acceptor in the active site.

It belongs to the thiolase-like superfamily. Thiolase family. Heterotetramer of two alpha chains (FadB) and two beta chains (FadA).

It localises to the cytoplasm. It catalyses the reaction an acyl-CoA + acetyl-CoA = a 3-oxoacyl-CoA + CoA. The protein operates within lipid metabolism; fatty acid beta-oxidation. In terms of biological role, catalyzes the final step of fatty acid oxidation in which acetyl-CoA is released and the CoA ester of a fatty acid two carbons shorter is formed. The chain is 3-ketoacyl-CoA thiolase from Stutzerimonas stutzeri (strain A1501) (Pseudomonas stutzeri).